A 648-amino-acid polypeptide reads, in one-letter code: Biosynthetic arginine decarboxylase (648 aa).

Residue Lys-109 is modified to N6-(pyridoxal phosphate)lysine. Residue 291 to 301 (LDVGGGLGVDY) coordinates substrate.

The protein belongs to the Orn/Lys/Arg decarboxylase class-II family. SpeA subfamily. It depends on Mg(2+) as a cofactor. Pyridoxal 5'-phosphate is required as a cofactor.

The enzyme catalyses L-arginine + H(+) = agmatine + CO2. The protein operates within amine and polyamine biosynthesis; agmatine biosynthesis; agmatine from L-arginine: step 1/1. Functionally, catalyzes the biosynthesis of agmatine from arginine. This chain is Biosynthetic arginine decarboxylase, found in Prochlorococcus marinus (strain MIT 9303).